Reading from the N-terminus, the 933-residue chain is Anoctamin-7 (933 aa).

At 1–355 the chain is on the cytoplasmic side; the sequence is MRMAATAWAG…YFAWLGFYTG (355 aa). A disordered region spans residues 43-101; the sequence is ETSSGSHCARSRMLRRRAQEEDSTVLIDVSPPEAEKRGSYGSTAHASEPGGQQAAACRA. Residues 356–376 form a helical membrane-spanning segment; sequence WLLPAAVVGTLVFLVGCFLVF. Residues 377–420 are Extracellular-facing; that stretch reads SDIPTQELCGSKDSFEMCPLCLDCPFWLLSSACALAQAGRLFDH. The chain crosses the membrane as a helical span at residues 421–441; the sequence is GGTVFFSLFMALWAVLLLEYW. Topologically, residues 442–499 are cytoplasmic; the sequence is KRKSATLAYRWDCSDYEDTEERPRPQFAASAPMTAPNPITGEDEPYFPERSRARRMLA. The chain crosses the membrane as a helical span at residues 500 to 520; sequence GSVVIVVMVAVVVMCLVSIIL. At 521–550 the chain is on the extracellular side; that stretch reads YRAIMAIVVSRSGNTLLAAWASRIASLTGS. The chain crosses the membrane as a helical span at residues 551–571; that stretch reads VVNLVFILILSKIYVSLAHVL. The Cytoplasmic segment spans residues 572–588; the sequence is TRWEMHRTQTKFEDAFT. Residues 589-609 form a helical membrane-spanning segment; it reads LKVFIFQFVNFYSSPVYIAFF. The Extracellular segment spans residues 610 to 714; that stretch reads KGRFVGYPGN…FDEYLEMVLQ (105 aa). Residues 715 to 735 form a helical membrane-spanning segment; the sequence is FGFVTIFVAACPLAPLFALLN. Topologically, residues 736 to 763 are cytoplasmic; that stretch reads NWVEIRLDARKFVCEYRRPVAERAQDIG. The helical transmembrane segment at 764–784 threads the bilayer; it reads IWFHILAGLTHLAVISNAFLL. Over 785–843 the chain is Extracellular; that stretch reads AFSSDFLPRAYYRWTRAHDLRGFLNFTLARAPSSFAAAHNRTCRYRAFRDDDGHYSQTY. N-linked (GlcNAc...) asparagine glycans are attached at residues asparagine 809 and asparagine 824. A helical transmembrane segment spans residues 844-864; sequence WNLLAIRLAFVIVFEHVVFSV. Over 865 to 933 the chain is Cytoplasmic; the sequence is GRLLDLLVPD…TVPKASQLQQ (69 aa). Residues 902–933 form a disordered region; sequence GTNGTKDEQPEGSELSSHWTPFTVPKASQLQQ. A compositionally biased stretch (polar residues) spans 915–933; the sequence is ELSSHWTPFTVPKASQLQQ.

This sequence belongs to the anoctamin family. Specifically expressed in epithelial cells of the prostate (at protein level).

The protein localises to the cell membrane. Its subcellular location is the cell junction. The protein resides in the endoplasmic reticulum. It localises to the cytoplasm. It is found in the cytosol. The enzyme catalyses a 1,2-diacyl-sn-glycero-3-phospho-L-serine(in) = a 1,2-diacyl-sn-glycero-3-phospho-L-serine(out). The catalysed reaction is a beta-D-galactosyl-(1&lt;-&gt;1')-N-acylsphing-4-enine(out) = a beta-D-galactosyl-(1&lt;-&gt;1')-N-acylsphing-4-enine(in). It carries out the reaction a 1,2-diacyl-sn-glycero-3-phosphocholine(in) = a 1,2-diacyl-sn-glycero-3-phosphocholine(out). Has calcium-dependent phospholipid scramblase activity; scrambles phosphatidylserine, phosphatidylcholine and galactosylceramide. Does not exhibit calcium-activated chloride channel (CaCC) activity. May play a role in cell-cell interactions. The sequence is that of Anoctamin-7 (ANO7) from Homo sapiens (Human).